We begin with the raw amino-acid sequence, 379 residues long: Alcohol dehydrogenase 2 (379 aa).

A Zn(2+)-binding site is contributed by cysteine 48. NAD(+) is bound at residue 49-53 (HTDML). Histidine 69, cysteine 100, cysteine 103, cysteine 106, cysteine 114, and cysteine 178 together coordinate Zn(2+). NAD(+) contacts are provided by residues 203–208 (GLGAVG), aspartate 227, lysine 232, 275–277 (TGI), 298–300 (IGA), and 321–323 (TTF).

The protein belongs to the zinc-containing alcohol dehydrogenase family. Class-IV subfamily. As to quaternary structure, homodimer. Zn(2+) serves as cofactor. Expressed in flowers and disk florets.

It catalyses the reaction (R,R)-chrysanthemol + NAD(+) = (1R,3R)-chrysanthemal + NADH + H(+). The enzyme catalyses nerol + NAD(+) = neral + NADH + H(+). The catalysed reaction is (S)-(-)-citronellol + NAD(+) = (S)-(-)-citronellal + NADH + H(+). It carries out the reaction perillyl alcohol + NAD(+) = perillyl aldehyde + NADH + H(+). It catalyses the reaction (6E)-8-hydroxygeraniol + NAD(+) = (6E)-8-hydroxygeranial + NADH + H(+). The enzyme catalyses (2E)-geraniol + NAD(+) = (2E)-geranial + NADH + H(+). Its pathway is isoprenoid biosynthesis. In terms of biological role, component of the monoterpenoid pyrethrins biosynthesis; pyrethrins are widely used plant-derived pesticide. Mediates the conversion of trans-chrysanthemol into trans-chrysanthemal. The chain is Alcohol dehydrogenase 2 from Tanacetum cinerariifolium (Dalmatian daisy).